We begin with the raw amino-acid sequence, 89 residues long: Small ribosomal subunit protein uS14A (89 aa).

This sequence belongs to the universal ribosomal protein uS14 family. In terms of assembly, part of the 30S ribosomal subunit. Contacts proteins S3 and S10.

Binds 16S rRNA, required for the assembly of 30S particles and may also be responsible for determining the conformation of the 16S rRNA at the A site. The chain is Small ribosomal subunit protein uS14A from Listeria monocytogenes serovar 1/2a (strain ATCC BAA-679 / EGD-e).